The sequence spans 320 residues: Beta-carotene ketolase (320 aa).

The enzyme catalyses all-trans-beta-carotene + 2 AH2 + 2 O2 = echinenone + 2 A + 3 H2O. It catalyses the reaction echinenone + 2 AH2 + 2 O2 = canthaxanthin + 2 A + 3 H2O. The protein operates within carotenoid biosynthesis; astaxanthin biosynthesis. Converts beta-carotene to canthaxanthin via echinenone. The protein is Beta-carotene ketolase of Haematococcus lacustris (Green alga).